Here is a 356-residue protein sequence, read N- to C-terminus: Glucose 1-dehydrogenase 2 (356 aa).

D38 serves as a coordination point for Zn(2+). Position 40 (S40) interacts with substrate. Residues H64 and E65 each contribute to the Zn(2+) site. Residues E114 and E150 each coordinate substrate. E150 contributes to the Zn(2+) binding site. Residues 181-184, 206-207, and 301-303 each bind NADP(+); these read NGNL, RR, and VVN. N303 is a binding site for substrate.

It belongs to the zinc-containing alcohol dehydrogenase family. Glucose 1-dehydrogenase subfamily. It depends on Zn(2+) as a cofactor.

It carries out the reaction D-glucose + NAD(+) = D-glucono-1,5-lactone + NADH + H(+). The catalysed reaction is D-glucose + NADP(+) = D-glucono-1,5-lactone + NADPH + H(+). Catalyzes the NAD(P)(+)-dependent oxidation of D-glucose to D-gluconate via gluconolactone. Can utilize both NAD(+) and NADP(+) as electron acceptor. Is involved in the degradation of glucose through a modified Entner-Doudoroff pathway. The polypeptide is Glucose 1-dehydrogenase 2 (Haloterrigena turkmenica (strain ATCC 51198 / DSM 5511 / JCM 9101 / NCIMB 13204 / VKM B-1734 / 4k) (Halococcus turkmenicus)).